A 621-amino-acid polypeptide reads, in one-letter code: Zinc metalloproteinase-disintegrin-like NaMP (621 aa).

The first 20 residues, 1 to 20 (MIQPLLVAICLVVFPYQGSS), serve as a signal peptide directing secretion. The propeptide occupies 21–188 (TILESGKVRD…GESDETIKKI (168 aa)). Residues 206 to 402 (KHIELYMVAD…KSAQCILNDP (197 aa)) enclose the Peptidase M12B domain. Asn225, Asn268, and Asn319 each carry an N-linked (GlcNAc...) asparagine glycan. Intrachain disulfides connect Cys317–Cys397, Cys357–Cys381, Cys359–Cys364, Cys413–Cys442, Cys424–Cys437, Cys426–Cys432, Cys436–Cys459, Cys450–Cys456, Cys455–Cys481, Cys468–Cys488, Cys475–Cys507, Cys500–Cys512, Cys519–Cys569, Cys534–Cys579, Cys547–Cys557, Cys564–Cys605, and Cys599–Cys610. Residue His342 participates in Zn(2+) binding. The active site involves Glu343. The Zn(2+) site is built by His346 and His352. The Disintegrin domain maps to 410–496 (TAICGNGFVE…ECPMNHFHMN (87 aa)). The D/ECD-tripeptide signature appears at 474–476 (DCD). Asn551 carries an N-linked (GlcNAc...) asparagine glycan.

This sequence belongs to the venom metalloproteinase (M12B) family. P-III subfamily. P-IIIa sub-subfamily. Monomer. The cofactor is Zn(2+). As to expression, expressed by the venom gland.

It is found in the secreted. Snake venom zinc metalloproteinase that inhibits platelet aggregation and degrades fibrinogen. The protein is Zinc metalloproteinase-disintegrin-like NaMP of Naja atra (Chinese cobra).